The sequence spans 359 residues: GTP 3',8-cyclase (359 aa).

Residues 33-260 form the Radical SAM core domain; it reads RFGRRHDSLR…PTGRENPSAP (228 aa). Arg-42 provides a ligand contact to GTP. 2 residues coordinate [4Fe-4S] cluster: Cys-49 and Cys-53. Tyr-55 provides a ligand contact to S-adenosyl-L-methionine. Cys-56 contributes to the [4Fe-4S] cluster binding site. Arg-93 contributes to the GTP binding site. S-adenosyl-L-methionine is bound at residue Gly-97. GTP is bound at residue Thr-124. Ser-148 lines the S-adenosyl-L-methionine pocket. GTP is bound at residue Lys-185. Met-219 lines the S-adenosyl-L-methionine pocket. 2 residues coordinate [4Fe-4S] cluster: Cys-286 and Cys-289. GTP is bound at residue 291 to 293; the sequence is RLR. [4Fe-4S] cluster is bound at residue Cys-303.

This sequence belongs to the radical SAM superfamily. MoaA family. Monomer and homodimer. It depends on [4Fe-4S] cluster as a cofactor.

The catalysed reaction is GTP + AH2 + S-adenosyl-L-methionine = (8S)-3',8-cyclo-7,8-dihydroguanosine 5'-triphosphate + 5'-deoxyadenosine + L-methionine + A + H(+). The protein operates within cofactor biosynthesis; molybdopterin biosynthesis. In terms of biological role, catalyzes the cyclization of GTP to (8S)-3',8-cyclo-7,8-dihydroguanosine 5'-triphosphate. This chain is GTP 3',8-cyclase, found in Rhodopirellula baltica (strain DSM 10527 / NCIMB 13988 / SH1).